A 304-amino-acid chain; its full sequence is ATP phosphoribosyltransferase (304 aa).

It belongs to the ATP phosphoribosyltransferase family. Long subfamily. The cofactor is Mg(2+).

It localises to the cytoplasm. The catalysed reaction is 1-(5-phospho-beta-D-ribosyl)-ATP + diphosphate = 5-phospho-alpha-D-ribose 1-diphosphate + ATP. Its pathway is amino-acid biosynthesis; L-histidine biosynthesis; L-histidine from 5-phospho-alpha-D-ribose 1-diphosphate: step 1/9. With respect to regulation, feedback inhibited by histidine. Functionally, catalyzes the condensation of ATP and 5-phosphoribose 1-diphosphate to form N'-(5'-phosphoribosyl)-ATP (PR-ATP). Has a crucial role in the pathway because the rate of histidine biosynthesis seems to be controlled primarily by regulation of HisG enzymatic activity. This Xanthomonas euvesicatoria pv. vesicatoria (strain 85-10) (Xanthomonas campestris pv. vesicatoria) protein is ATP phosphoribosyltransferase.